Reading from the N-terminus, the 268-residue chain is Tryptophan synthase alpha chain (268 aa).

Residues glutamate 49 and aspartate 60 each act as proton acceptor in the active site.

Belongs to the TrpA family. As to quaternary structure, tetramer of two alpha and two beta chains.

The enzyme catalyses (1S,2R)-1-C-(indol-3-yl)glycerol 3-phosphate + L-serine = D-glyceraldehyde 3-phosphate + L-tryptophan + H2O. It functions in the pathway amino-acid biosynthesis; L-tryptophan biosynthesis; L-tryptophan from chorismate: step 5/5. In terms of biological role, the alpha subunit is responsible for the aldol cleavage of indoleglycerol phosphate to indole and glyceraldehyde 3-phosphate. This Xylella fastidiosa (strain 9a5c) protein is Tryptophan synthase alpha chain.